A 463-amino-acid chain; its full sequence is Glutamate--tRNA ligase 2 (463 aa).

Positions 11–21 (PSPTGYLHIGG) match the 'HIGH' region motif. A 'KMSKS' region motif is present at residues 240-244 (KLSKR). Lys-243 serves as a coordination point for ATP.

This sequence belongs to the class-I aminoacyl-tRNA synthetase family. Glutamate--tRNA ligase type 1 subfamily. As to quaternary structure, monomer.

The protein resides in the cytoplasm. It carries out the reaction tRNA(Glu) + L-glutamate + ATP = L-glutamyl-tRNA(Glu) + AMP + diphosphate. Its function is as follows. Catalyzes the attachment of glutamate to tRNA(Glu) in a two-step reaction: glutamate is first activated by ATP to form Glu-AMP and then transferred to the acceptor end of tRNA(Glu). The protein is Glutamate--tRNA ligase 2 of Campylobacter jejuni subsp. jejuni serotype O:2 (strain ATCC 700819 / NCTC 11168).